A 281-amino-acid chain; its full sequence is Pantothenate synthetase (281 aa).

26-33 (MGNLHDGH) is a binding site for ATP. H33 (proton donor) is an active-site residue. Q57 is a binding site for (R)-pantoate. A beta-alanine-binding site is contributed by Q57. An ATP-binding site is contributed by 145-148 (GEKD). Q151 lines the (R)-pantoate pocket. Residue 182 to 185 (MSSR) coordinates ATP.

The protein belongs to the pantothenate synthetase family. Homodimer.

It localises to the cytoplasm. The enzyme catalyses (R)-pantoate + beta-alanine + ATP = (R)-pantothenate + AMP + diphosphate + H(+). The protein operates within cofactor biosynthesis; (R)-pantothenate biosynthesis; (R)-pantothenate from (R)-pantoate and beta-alanine: step 1/1. In terms of biological role, catalyzes the condensation of pantoate with beta-alanine in an ATP-dependent reaction via a pantoyl-adenylate intermediate. This Idiomarina loihiensis (strain ATCC BAA-735 / DSM 15497 / L2-TR) protein is Pantothenate synthetase.